A 108-amino-acid chain; its full sequence is Nucleoid-associated protein GWCH70_0020 (108 aa).

Positions 1-34 (MMRGGMGNMQKMMKQMQKMQKEMQKAQEQLAEKT) are disordered. Over residues 9-18 (MQKMMKQMQK) the composition is skewed to low complexity. Residues 19 to 34 (MQKEMQKAQEQLAEKT) show a composition bias toward basic and acidic residues.

This sequence belongs to the YbaB/EbfC family. As to quaternary structure, homodimer.

It localises to the cytoplasm. Its subcellular location is the nucleoid. In terms of biological role, binds to DNA and alters its conformation. May be involved in regulation of gene expression, nucleoid organization and DNA protection. In Geobacillus sp. (strain WCH70), this protein is Nucleoid-associated protein GWCH70_0020.